Here is a 133-residue protein sequence, read N- to C-terminus: Small ribosomal subunit protein bS6 (133 aa).

The segment covering 106–125 has biased composition (basic and acidic residues); it reads REERVERAPRAPRPEVKAEP. The segment at 106–133 is disordered; sequence REERVERAPRAPRPEVKAEPEAEATAEA.

This sequence belongs to the bacterial ribosomal protein bS6 family.

In terms of biological role, binds together with bS18 to 16S ribosomal RNA. The sequence is that of Small ribosomal subunit protein bS6 from Psychromonas ingrahamii (strain DSM 17664 / CCUG 51855 / 37).